The following is a 713-amino-acid chain: Cyclomaltodextrin glucanotransferase (713 aa).

The signal sequence occupies residues 1 to 27 (MKKFLKSTAALALGLSLTFGLFSPAQA). Residues 28-165 (APDTSVSNKQ…NIKVIIDFAP (138 aa)) form an A1 region. Ca(2+)-binding residues include Asp-54, Asn-56, Asn-59, and Asn-60. An intrachain disulfide couples Cys-70 to Cys-77. The Ca(2+) site is built by Gly-78 and Asp-80. 127–128 (YW) provides a ligand contact to substrate. Position 166 (Asn-166) interacts with Ca(2+). Residues 166–229 (NHTSPASSDQ…NLYDLADLNH (64 aa)) are b. Residues His-167 and 172–174 (SSD) contribute to the substrate site. Ile-217 serves as a coordination point for Ca(2+). 220-223 (NLYD) is a binding site for substrate. Residue Asp-226 coordinates Ca(2+). An A2 region spans residues 230-433 (NNSTVDVYLK…LRKCNPAIAY (204 aa)). Residue Arg-254 participates in substrate binding. Asp-256 functions as the Nucleophile in the catalytic mechanism. Residue 259–260 (KH) coordinates substrate. A Ca(2+)-binding site is contributed by His-260. Residue Glu-284 is the Proton donor of the active site. Residue Ala-342 coordinates Ca(2+). Positions 354, 398, and 402 each coordinate substrate. The tract at residues 434-522 (GSTQERWINN…GTAVWQYTAA (89 aa)) is c. A d region spans residues 523–609 (TATPTIGHVG…SNVYDNFEVL (87 aa)). Residues 526–607 (PTIGHVGPMM…TASNVYDNFE (82 aa)) enclose the IPT/TIG domain. Ca(2+) is bound at residue Asp-604. The CBM20 domain occupies 608–713 (VLSGDQVSVR…TATINVNWQP (106 aa)). Residues 610-713 (SGDQVSVRFV…TATINVNWQP (104 aa)) are e.

The protein belongs to the glycosyl hydrolase 13 family. As to quaternary structure, monomer. Ca(2+) is required as a cofactor.

Its subcellular location is the secreted. The catalysed reaction is Cyclizes part of a (1-&gt;4)-alpha-D-glucan chain by formation of a (1-&gt;4)-alpha-D-glucosidic bond.. This chain is Cyclomaltodextrin glucanotransferase (cgt), found in Niallia circulans (Bacillus circulans).